The chain runs to 363 residues: dTDP-L-rhamnose 4-epimerase (363 aa).

Residues 18–24, 68–69, and 90–94 each bind NAD(+); these read GGAGFIG, DV, and LAAET. The substrate site is built by serine 136 and tyrosine 191. 2 residues coordinate NAD(+): tyrosine 191 and lysine 195. Tyrosine 191 (proton acceptor) is an active-site residue. Substrate-binding residues include asparagine 220 and arginine 259.

Belongs to the NAD(P)-dependent epimerase/dehydratase family. The cofactor is NAD(+).

The enzyme catalyses dTDP-6-deoxy-beta-L-talose = dTDP-beta-L-rhamnose. Its pathway is bacterial outer membrane biogenesis; LPS O-antigen biosynthesis. In terms of biological role, catalyzes the interconvertion of dTDP-6-deoxy-L-talose and dTDP-L-rhamnose. The equilibrium is strongly toward dTDP-L-rhamnose. In Burkholderia thailandensis (strain ATCC 700388 / DSM 13276 / CCUG 48851 / CIP 106301 / E264), this protein is dTDP-L-rhamnose 4-epimerase (wbiB).